A 220-amino-acid polypeptide reads, in one-letter code: Apoptosis regulator BALF1 (220 aa).

It belongs to the Epstein-Barr virus BALF1 family. In terms of assembly, interacts with BHRF1; this interaction modulates BHRF1 activity. Interacts with host BAX and BAK1.

The protein localises to the host cytoplasm. Its function is as follows. Modulates the antiapoptotic activity of the viral protein BHRF1. May also play an active part in oncogenesis in Burkitt's lymphomy and nasopharyngeal carcinoma. The chain is Apoptosis regulator BALF1 from Homo sapiens (Human).